The chain runs to 161 residues: Photosystem II extrinsic protein V (161 aa).

Residues 1 to 25 (MKKFFISVVFIVLLTFTTFINSATA) form the signal peptide. The heme c site is built by Cys-61, Cys-64, His-65, and His-116.

The protein belongs to the cytochrome c family. PsbV subfamily. As to quaternary structure, PSII is composed of 1 copy each of membrane proteins PsbA, PsbB, PsbC, PsbD, PsbE, PsbF, PsbH, PsbI, PsbJ, PsbK, PsbL, PsbM, PsbT, PsbX, PsbY, PsbZ, Psb30/Ycf12, peripheral proteins PsbO, CyanoQ (PsbQ), PsbU, PsbV and a large number of cofactors. It forms dimeric complexes. Heme c is required as a cofactor.

It localises to the cellular thylakoid membrane. In terms of biological role, one of the extrinsic, lumenal subunits of photosystem II (PSII). PSII is a light-driven water plastoquinone oxidoreductase, using light energy to abstract electrons from H(2)O, generating a proton gradient subsequently used for ATP formation. The extrinsic proteins stabilize the structure of photosystem II oxygen-evolving complex (OEC), the ion environment of oxygen evolution and protect the OEC against heat-induced inactivation. Low-potential cytochrome c that plays a role in the OEC of PSII. The chain is Photosystem II extrinsic protein V from Trichodesmium erythraeum (strain IMS101).